A 222-amino-acid polypeptide reads, in one-letter code: Small ribosomal subunit protein uS2 (222 aa).

This sequence belongs to the universal ribosomal protein uS2 family.

In Karelsulcia muelleri (strain GWSS) (Sulcia muelleri), this protein is Small ribosomal subunit protein uS2.